Here is a 390-residue protein sequence, read N- to C-terminus: Guanine nucleotide-binding protein alpha-7 subunit (390 aa).

Composition is skewed to low complexity over residues methionine 1–threonine 12 and serine 22–serine 42. Positions methionine 1–serine 42 are disordered. The 321-residue stretch at serine 70–isoleucine 390 folds into the G-alpha domain. Residues lysine 73–threonine 86 form a G1 motif region. GTP is bound by residues glycine 78 to serine 85, leucine 213 to serine 219, aspartate 238 to glutamine 242, asparagine 307 to aspartate 310, and alanine 363. Serine 85 provides a ligand contact to Mg(2+). The G2 motif stretch occupies residues aspartate 211–serine 219. Positions phenylalanine 234–arginine 243 are G3 motif. The tract at residues isoleucine 303 to aspartate 310 is G4 motif. The segment at threonine 361–threonine 366 is G5 motif.

The protein belongs to the G-alpha family. G proteins are composed of 3 units; alpha, beta and gamma. The alpha chain contains the guanine nucleotide binding site.

In terms of biological role, guanine nucleotide-binding proteins (G proteins) are involved as modulators or transducers in various transmembrane signaling systems. In Dictyostelium discoideum (Social amoeba), this protein is Guanine nucleotide-binding protein alpha-7 subunit (gpaG).